The chain runs to 246 residues: 1-(5-phosphoribosyl)-5-[(5-phosphoribosylamino)methylideneamino] imidazole-4-carboxamide isomerase (246 aa).

Residue D8 is the Proton acceptor of the active site. The Proton donor role is filled by D131.

It belongs to the HisA/HisF family.

It localises to the cytoplasm. The catalysed reaction is 1-(5-phospho-beta-D-ribosyl)-5-[(5-phospho-beta-D-ribosylamino)methylideneamino]imidazole-4-carboxamide = 5-[(5-phospho-1-deoxy-D-ribulos-1-ylimino)methylamino]-1-(5-phospho-beta-D-ribosyl)imidazole-4-carboxamide. It functions in the pathway amino-acid biosynthesis; L-histidine biosynthesis; L-histidine from 5-phospho-alpha-D-ribose 1-diphosphate: step 4/9. This chain is 1-(5-phosphoribosyl)-5-[(5-phosphoribosylamino)methylideneamino] imidazole-4-carboxamide isomerase, found in Polaromonas sp. (strain JS666 / ATCC BAA-500).